The sequence spans 382 residues: Chaperone protein DnaJ 2 (382 aa).

One can recognise a J domain in the interval 4–68 (DYYGLLGVSK…DKRRIVDLGG (65 aa)). Residues 132 to 214 (GVTKQVTVDT…CMGDGRIRAR (83 aa)) form a CR-type zinc finger. Zn(2+) contacts are provided by cysteine 145, cysteine 148, cysteine 162, cysteine 165, cysteine 188, cysteine 191, cysteine 202, and cysteine 205. 4 CXXCXGXG motif repeats span residues 145-152 (CDRCQGKG), 162-169 (CDTCGGRG), 188-195 (CPTCRGVG), and 202-209 (CQQCMGDG).

Belongs to the DnaJ family. In terms of assembly, homodimer. Interacts with RNase J. The cofactor is Zn(2+).

The protein localises to the cytoplasm. Participates actively in the response to hyperosmotic and heat shock by preventing the aggregation of stress-denatured proteins and by disaggregating proteins, also in an autonomous, DnaK-independent fashion. Unfolded proteins bind initially to DnaJ; upon interaction with the DnaJ-bound protein, DnaK hydrolyzes its bound ATP, resulting in the formation of a stable complex. GrpE releases ADP from DnaK; ATP binding to DnaK triggers the release of the substrate protein, thus completing the reaction cycle. Several rounds of ATP-dependent interactions between DnaJ, DnaK and GrpE are required for fully efficient folding. Also involved, together with DnaK and GrpE, in the DNA replication of plasmids through activation of initiation proteins. Inhibits the beta-lactamase and RNase activity of RNase J. The polypeptide is Chaperone protein DnaJ 2 (Mycobacterium tuberculosis (strain ATCC 25618 / H37Rv)).